Reading from the N-terminus, the 161-residue chain is DNA-directed RNA polymerase 18 kDa subunit (161 aa).

Belongs to the poxviridae DNA-directed RNA polymerase 18 kDa subunit family. The DNA-dependent RNA polymerase used for intermediate and late genes expression consists of eight subunits Rpo30/OPG66, Rpo7/OPG90, Rpo22/OPG103, Rpo147/OPG105, Rpo18/OPG119, Rpo19/OPG131, Rpo132/OPG151 and Rpo35/OPG156. The same holoenzyme, with the addition of the transcription-specificity factor OPG109, is used for early gene expression.

The protein localises to the virion. It catalyses the reaction RNA(n) + a ribonucleoside 5'-triphosphate = RNA(n+1) + diphosphate. Its function is as follows. Part of the DNA-dependent RNA polymerase which catalyzes the transcription of viral DNA into RNA using the four ribonucleoside triphosphates as substrates. Responsible for the transcription of early, intermediate and late genes. DNA-dependent RNA polymerase associates with the early transcription factor (ETF), itself composed of OPG118 and OPG133, thereby allowing the early genes transcription. Late transcription, and probably also intermediate transcription, require newly synthesized RNA polymerase. The chain is DNA-directed RNA polymerase 18 kDa subunit (OPG119) from Vaccinia virus (strain Copenhagen) (VACV).